The chain runs to 419 residues: Cytosine permease (419 aa).

Residues 1–19 lie on the Cytoplasmic side of the membrane; sequence MSQDNNFSQGPVPQSARKG. Residues 20–39 traverse the membrane as a helical segment; that stretch reads VLALTFVMLGLTFFSASMWT. At 40–51 the chain is on the periplasmic side; the sequence is GGTLGTGLSYHD. The chain crosses the membrane as a helical span at residues 52–71; sequence FFLAVLIGNLLLGIYTSFLG. Topologically, residues 72 to 100 are cytoplasmic; sequence YIGAKTGLTTHLLARFSFGVKGSWLPSLL. A helical transmembrane segment spans residues 101–120; the sequence is LGGTQVGWFGVGVAMFAIPV. Residues 121–127 lie on the Periplasmic side of the membrane; the sequence is GKATGLD. A helical membrane pass occupies residues 128–147; it reads INLLIAVSGLLMTVTVFFGI. Residues 148 to 152 are Cytoplasmic-facing; the sequence is SALTV. A helical transmembrane segment spans residues 153-172; it reads LSVIAVPAIACLGGYSVWLA. The Periplasmic segment spans residues 173–192; it reads VNGMGGLDALKAVVPAQPLD. The chain crosses the membrane as a helical span at residues 193–212; sequence FNVALALVVGSFISAGTLTA. At 213 to 221 the chain is on the cytoplasmic side; the sequence is DFVRFGRNA. Residues 222–242 form a helical membrane-spanning segment; that stretch reads KLAVLVAMVAFFLGNSLMFIF. Residues 243 to 257 lie on the Periplasmic side of the membrane; that stretch reads GAAGAAALGMADISD. The helical transmembrane segment at 258–277 threads the bilayer; the sequence is VMIAQGLLLPAIVVLGLNIW. Residues 278–300 are Cytoplasmic-facing; it reads TTNDNALYASGLGFANITGMSSK. The chain crosses the membrane as a helical span at residues 301–320; the sequence is TLSVINGIIGTVCALWLYNN. Position 321 (Phe-321) is a topological domain, periplasmic. A helical transmembrane segment spans residues 322-341; the sequence is VGWLTFLSAAIPPVGGVIIA. Residues 342–358 lie on the Cytoplasmic side of the membrane; that stretch reads DYLMNRRRYEHFATTRM. The chain crosses the membrane as a helical span at residues 359–378; that stretch reads MSVNWVAILAVALGIAAGHW. Residues 379–380 are Periplasmic-facing; that stretch reads LP. Residues 381–400 form a helical membrane-spanning segment; it reads GIVPVNAVLGGALSYLILNP. Residues 401 to 419 are Cytoplasmic-facing; sequence ILNRKTTAAMTHVEANSVE.

Belongs to the purine-cytosine permease (2.A.39) family.

The protein resides in the cell inner membrane. Required for cytosine transport into the cell. This Escherichia coli O6:H1 (strain CFT073 / ATCC 700928 / UPEC) protein is Cytosine permease (codB).